Consider the following 22-residue polypeptide: ELPGLPKGEKEQQEAIEHIDEV.

The disordered stretch occupies residues 1 to 22; it reads ELPGLPKGEKEQQEAIEHIDEV. Basic and acidic residues predominate over residues 7 to 22; that stretch reads KGEKEQQEAIEHIDEV.

This sequence to human SET/PHAPII protein. Oligomer.

Its subcellular location is the cytoplasm. Its function is as follows. Has a role in the physiological regulation of fucosylation processes. This is Fuctinin-2 from Rattus norvegicus (Rat).